Reading from the N-terminus, the 253-residue chain is HTH-type transcriptional regulator YdeO (253 aa).

The HTH araC/xylS-type domain maps to 137–233 (GKVRNIVNMK…GNSPKRVSKE (97 aa)). 2 consecutive DNA-binding regions (H-T-H motif) follow at residues 154 to 175 (KDIC…KQEQ) and 200 to 223 (VNKI…RKHF).

Functionally, induces the expression of gadE. Could also regulate the expression of other genes involved in acid resistance. In Shigella flexneri, this protein is HTH-type transcriptional regulator YdeO (ydeO).